A 229-amino-acid polypeptide reads, in one-letter code: Large ribosomal subunit protein uL1 (229 aa).

This sequence belongs to the universal ribosomal protein uL1 family. Part of the 50S ribosomal subunit.

Its function is as follows. Binds directly to 23S rRNA. The L1 stalk is quite mobile in the ribosome, and is involved in E site tRNA release. Protein L1 is also a translational repressor protein, it controls the translation of the L11 operon by binding to its mRNA. In Streptococcus pyogenes serotype M3 (strain SSI-1), this protein is Large ribosomal subunit protein uL1.